A 698-amino-acid chain; its full sequence is Elongation factor G 2 (698 aa).

Residues glutamate 8–valine 290 enclose the tr-type G domain. GTP contacts are provided by residues alanine 17–threonine 24, aspartate 88–histidine 92, and asparagine 142–aspartate 145.

This sequence belongs to the TRAFAC class translation factor GTPase superfamily. Classic translation factor GTPase family. EF-G/EF-2 subfamily.

The protein localises to the cytoplasm. In terms of biological role, catalyzes the GTP-dependent ribosomal translocation step during translation elongation. During this step, the ribosome changes from the pre-translocational (PRE) to the post-translocational (POST) state as the newly formed A-site-bound peptidyl-tRNA and P-site-bound deacylated tRNA move to the P and E sites, respectively. Catalyzes the coordinated movement of the two tRNA molecules, the mRNA and conformational changes in the ribosome. The protein is Elongation factor G 2 of Methylococcus capsulatus (strain ATCC 33009 / NCIMB 11132 / Bath).